We begin with the raw amino-acid sequence, 249 residues long: Bacillaene synthase decarboxylase PksI (249 aa).

Histidine 230 is an active-site residue.

Belongs to the enoyl-CoA hydratase/isomerase family. Homotrimer. Does not form a heterotrimeric complex with PksH.

The protein localises to the cytoplasm. It participates in antibiotic biosynthesis; bacillaene biosynthesis. Involved in some intermediate steps for the synthesis of the antibiotic polyketide bacillaene which is involved in secondary metabolism. Catalyzes the decarboxylation of the 3-methylglutaconyl group tethered to PksL to a 3-methylcrotonyl moiety. The sequence is that of Bacillaene synthase decarboxylase PksI (pksI) from Bacillus subtilis (strain 168).